The sequence spans 292 residues: NAD kinase (292 aa).

Residue Asp-73 is the Proton acceptor of the active site. NAD(+)-binding positions include 73–74, 147–148, His-158, Arg-175, Asp-177, 188–193, and Gln-247; these read DG, NE, and TGYSLS.

It belongs to the NAD kinase family. Requires a divalent metal cation as cofactor.

The protein resides in the cytoplasm. It catalyses the reaction NAD(+) + ATP = ADP + NADP(+) + H(+). Functionally, involved in the regulation of the intracellular balance of NAD and NADP, and is a key enzyme in the biosynthesis of NADP. Catalyzes specifically the phosphorylation on 2'-hydroxyl of the adenosine moiety of NAD to yield NADP. The chain is NAD kinase from Buchnera aphidicola subsp. Acyrthosiphon pisum (strain 5A).